A 211-amino-acid polypeptide reads, in one-letter code: MASRLLARSKALALALSRADAAAPGPAAGVQWLRTLSSLPRDPAAAASPAPAPRQPAVGSPLGLSKIPGYEQTSRLSGTQVLPRWFSTGTSNGSSAQQEGATRKVMAFSPLEASIAKPRKGPLTSESWKVKQTELLTRSTYYMIPTLLLVSKNSISTSLLVASVFHQVYMFYKEILLDYVHHDITRKWVFIYFKILLIIMAKETVVYFDLF.

The N-terminal 36 residues, 1-36 (MASRLLARSKALALALSRADAAAPGPAAGVQWLRTL), are a transit peptide targeting the mitochondrion. The interval 41–64 (RDPAAAASPAPAPRQPAVGSPLGL) is disordered. Residue His166 participates in heme binding. Residue Tyr179 participates in a ubiquinone binding. The chain crosses the membrane as a helical span at residues 188–210 (WVFIYFKILLIIMAKETVVYFDL).

As to quaternary structure, component of complex II composed of eight subunits in plants: four classical SDH subunits SDH1, SDH2, SDH3 and SDH4 (a flavoprotein (FP), an iron-sulfur protein (IP), and a cytochrome b composed of a large and a small subunit.), as well as four subunits unknown in mitochondria from bacteria and heterotrophic eukaryotes. It depends on heme as a cofactor.

Its subcellular location is the mitochondrion inner membrane. Its pathway is carbohydrate metabolism; tricarboxylic acid cycle. Its function is as follows. Membrane-anchoring subunit of succinate dehydrogenase (SDH). The chain is Succinate dehydrogenase subunit 4, mitochondrial from Oryza sativa subsp. japonica (Rice).